A 382-amino-acid polypeptide reads, in one-letter code: D-galactonate dehydratase (382 aa).

Asp-183 is a binding site for Mg(2+). The active-site Proton donor is His-185. Mg(2+) is bound by residues Glu-209 and Glu-235. The active-site Proton acceptor is His-285.

It belongs to the mandelate racemase/muconate lactonizing enzyme family. GalD subfamily. Mg(2+) serves as cofactor.

It catalyses the reaction D-galactonate = 2-dehydro-3-deoxy-D-galactonate + H2O. Its pathway is carbohydrate acid metabolism; D-galactonate degradation; D-glyceraldehyde 3-phosphate and pyruvate from D-galactonate: step 1/3. In terms of biological role, catalyzes the dehydration of D-galactonate to 2-keto-3-deoxy-D-galactonate. The sequence is that of D-galactonate dehydratase from Salmonella dublin (strain CT_02021853).